The following is a 354-amino-acid chain: S-adenosylmethionine:tRNA ribosyltransferase-isomerase (354 aa).

The protein belongs to the QueA family. As to quaternary structure, monomer.

Its subcellular location is the cytoplasm. It carries out the reaction 7-aminomethyl-7-carbaguanosine(34) in tRNA + S-adenosyl-L-methionine = epoxyqueuosine(34) in tRNA + adenine + L-methionine + 2 H(+). The protein operates within tRNA modification; tRNA-queuosine biosynthesis. Transfers and isomerizes the ribose moiety from AdoMet to the 7-aminomethyl group of 7-deazaguanine (preQ1-tRNA) to give epoxyqueuosine (oQ-tRNA). This Salmonella paratyphi A (strain ATCC 9150 / SARB42) protein is S-adenosylmethionine:tRNA ribosyltransferase-isomerase.